The primary structure comprises 643 residues: Phosphomethylpyrimidine synthase (643 aa).

Residues N248, M277, Y306, H342, 362–364, 403–406, and E442 each bind substrate; these read SRG and DGLR. H446 is a Zn(2+) binding site. Y469 is a substrate binding site. H510 is a Zn(2+) binding site. C590, C593, and C598 together coordinate [4Fe-4S] cluster.

This sequence belongs to the ThiC family. As to quaternary structure, homodimer. Requires [4Fe-4S] cluster as cofactor.

It catalyses the reaction 5-amino-1-(5-phospho-beta-D-ribosyl)imidazole + S-adenosyl-L-methionine = 4-amino-2-methyl-5-(phosphooxymethyl)pyrimidine + CO + 5'-deoxyadenosine + formate + L-methionine + 3 H(+). It functions in the pathway cofactor biosynthesis; thiamine diphosphate biosynthesis. In terms of biological role, catalyzes the synthesis of the hydroxymethylpyrimidine phosphate (HMP-P) moiety of thiamine from aminoimidazole ribotide (AIR) in a radical S-adenosyl-L-methionine (SAM)-dependent reaction. The sequence is that of Phosphomethylpyrimidine synthase from Burkholderia orbicola (strain MC0-3).